Consider the following 794-residue polypeptide: Phosphoribosylformylglycinamidine synthase subunit PurL (794 aa).

Histidine 47 is a catalytic residue. ATP contacts are provided by tyrosine 50 and lysine 89. Glutamate 91 contributes to the Mg(2+) binding site. Substrate contacts are provided by residues 92-95 (SHNH) and arginine 114. Catalysis depends on histidine 93, which acts as the Proton acceptor. Aspartate 115 serves as a coordination point for Mg(2+). Residue glutamine 238 participates in substrate binding. Aspartate 266 provides a ligand contact to Mg(2+). 310 to 312 (ESQ) contributes to the substrate binding site. ATP is bound by residues aspartate 522 and glycine 559. Asparagine 560 is a Mg(2+) binding site. Serine 562 contacts substrate.

Belongs to the FGAMS family. As to quaternary structure, monomer. Part of the FGAM synthase complex composed of 1 PurL, 1 PurQ and 2 PurS subunits.

The protein resides in the cytoplasm. It carries out the reaction N(2)-formyl-N(1)-(5-phospho-beta-D-ribosyl)glycinamide + L-glutamine + ATP + H2O = 2-formamido-N(1)-(5-O-phospho-beta-D-ribosyl)acetamidine + L-glutamate + ADP + phosphate + H(+). The protein operates within purine metabolism; IMP biosynthesis via de novo pathway; 5-amino-1-(5-phospho-D-ribosyl)imidazole from N(2)-formyl-N(1)-(5-phospho-D-ribosyl)glycinamide: step 1/2. Its function is as follows. Part of the phosphoribosylformylglycinamidine synthase complex involved in the purines biosynthetic pathway. Catalyzes the ATP-dependent conversion of formylglycinamide ribonucleotide (FGAR) and glutamine to yield formylglycinamidine ribonucleotide (FGAM) and glutamate. The FGAM synthase complex is composed of three subunits. PurQ produces an ammonia molecule by converting glutamine to glutamate. PurL transfers the ammonia molecule to FGAR to form FGAM in an ATP-dependent manner. PurS interacts with PurQ and PurL and is thought to assist in the transfer of the ammonia molecule from PurQ to PurL. The sequence is that of Phosphoribosylformylglycinamidine synthase subunit PurL from Prochlorococcus marinus (strain MIT 9313).